The sequence spans 183 residues: dCTP deaminase, dUMP-forming (183 aa).

DCTP-binding positions include 99 to 104 (KSSIAR), Asp-117, 125 to 127 (TLE), Gln-146, Tyr-159, Lys-166, and Gln-170. Glu-127 functions as the Proton donor/acceptor in the catalytic mechanism.

It belongs to the dCTP deaminase family. Homotrimer.

The enzyme catalyses dCTP + 2 H2O = dUMP + NH4(+) + diphosphate. Its pathway is pyrimidine metabolism; dUMP biosynthesis; dUMP from dCTP: step 1/1. Bifunctional enzyme that catalyzes both the deamination of dCTP to dUTP and the hydrolysis of dUTP to dUMP without releasing the toxic dUTP intermediate. The chain is dCTP deaminase, dUMP-forming from Methanoregula boonei (strain DSM 21154 / JCM 14090 / 6A8).